A 322-amino-acid chain; its full sequence is MLVDKYGRVVDYLRISVTQRCNFRCRYCMPTTPFSWTPKENLLSFEELFLFVKVAIDEGVTKIRLTGGEPLVRKDLDVFVKMISDYKPDIDLALTTNGFMLRHYAKRLRDAGLKRINMSLDTLNEQKAKFIAQKSVLHEVLTGFEAALDAGLKVKINTVALKGVNDDELINLLEFARFRNSQIRFIEYMENSHAKDDLKGLKSDEILDIISQKYNVTKDEKLPNAPASIYRLDDGYKFGIIDPHKHDFCESCNRIRLSAEGLLIPCLYFEDALSIKDAVSRGDIIGASEILRQVLANKPKENKWAVGAANETSSRAFYQTGG.

Positions 5–233 constitute a Radical SAM core domain; it reads KYGRVVDYLR…NAPASIYRLD (229 aa). Arginine 14 lines the GTP pocket. Residues cysteine 21 and cysteine 25 each coordinate [4Fe-4S] cluster. Tyrosine 27 lines the S-adenosyl-L-methionine pocket. Position 28 (cysteine 28) interacts with [4Fe-4S] cluster. Arginine 64 contacts GTP. Glycine 68 contacts S-adenosyl-L-methionine. Threonine 95 contacts GTP. Serine 119 contacts S-adenosyl-L-methionine. Lysine 155 provides a ligand contact to GTP. Residue methionine 189 coordinates S-adenosyl-L-methionine. Positions 249 and 252 each coordinate [4Fe-4S] cluster. 254–256 is a binding site for GTP; sequence RIR. [4Fe-4S] cluster is bound at residue cysteine 266.

This sequence belongs to the radical SAM superfamily. MoaA family. Monomer and homodimer. The cofactor is [4Fe-4S] cluster.

The catalysed reaction is GTP + AH2 + S-adenosyl-L-methionine = (8S)-3',8-cyclo-7,8-dihydroguanosine 5'-triphosphate + 5'-deoxyadenosine + L-methionine + A + H(+). It participates in cofactor biosynthesis; molybdopterin biosynthesis. Catalyzes the cyclization of GTP to (8S)-3',8-cyclo-7,8-dihydroguanosine 5'-triphosphate. In Campylobacter curvus (strain 525.92), this protein is GTP 3',8-cyclase.